Reading from the N-terminus, the 541-residue chain is GPI alpha-1,2-mannosyltransferase 3 (541 aa).

Asn-18 carries N-linked (GlcNAc...) asparagine glycosylation. 9 helical membrane-spanning segments follow: residues 53–73 (LVLF…TSFV), 126–146 (VHLL…IADL), 182–202 (LTNT…PLEG), 214–234 (LVAL…PLLF), 245–265 (DLIL…SLII), 305–325 (GFPA…FLAP), 330–350 (IFLV…HKEF), 352–372 (FIYP…NNLK), and 377–397 (PALS…GLVH). N-linked (GlcNAc...) asparagine glycosylation is present at Asn-417.

This sequence belongs to the glycosyltransferase 22 family. PIGB subfamily.

The protein localises to the endoplasmic reticulum membrane. It participates in glycolipid biosynthesis; glycosylphosphatidylinositol-anchor biosynthesis. In terms of biological role, alpha-1,2-mannosyltransferase that catalyzes the transfer of the third mannose, via an alpha-1,2 bond, from a dolichol-phosphate-mannose (Dol-P-Man) to an alpha-D-Man-(1-&gt;6)-2-PEtn-alpha-D-Man-(1-&gt;4)-alpha-D-GlcN-(1-&gt;6)-(1-radyl,2-acyl-sn-glycero-3-phospho)-2-acyl-inositol intermediate to generate an alpha-D-Man-(1-&gt;2)-alpha-D-Man-(1-&gt;6)-2-PEtn-alpha-D-Man-(1-&gt;4)-alpha-D-GlcN-(1-&gt;6)-(1-radyl,2-acyl-sn-glycero-3-phospho)-2-acyl-inositol (also termed H6) and participates in the nineth step of the glycosylphosphatidylinositol-anchor biosynthesis. May also add the third mannose to an alpha-D-Man-(1-&gt;6)-alpha-D-Man-(1-&gt;4)-alpha-D-GlcN-(1-&gt;6)-(1-radyl,2-acyl-sn-glycero-3-phospho)-2-acyl-inositol (also termed H3) intermediate generating an alpha-D-Man-(1-&gt;2)-alpha-D-Man-(1-&gt;6)-alpha-D-Man-(1-&gt;4)-alpha-D-GlcN-(1-&gt;6)-(1-radyl,2-acyl-sn-glycero-3-phospho)-2-acyl-inositol (also termed H4). In Bos taurus (Bovine), this protein is GPI alpha-1,2-mannosyltransferase 3.